Reading from the N-terminus, the 297-residue chain is MGFVKVVKNKQYFKRYQVRFRRRREGKTDYYARKRLIFQDKNKYNTPKYRLIVRLSNRDITCQIAYARIEGDRIVCAAYSHELPRYGVKVGLTNYAAAYCTGLLVARRILQKLRLDTLYTGCTDVTGEEYLVEPVDDGPGAFRCYLDVGLARTTTGARIFGAMKGAVDGGLNIPHSVKRFPGYSAENKSFNAEVHRAHIFGQHVADYMRTLEEEDEDAYKRQFSKYIALGIKADDIETIYKNAHAGIRKDPAFHKKPEKKVTKKRFNLAKLTLEARKAKIAKHKADFLAKIQADVEA.

It belongs to the universal ribosomal protein uL18 family. As to quaternary structure, component of the large ribosomal subunit (LSU).

The protein localises to the cytoplasm. It localises to the nucleus. In terms of biological role, component of the ribosome, a large ribonucleoprotein complex responsible for the synthesis of proteins in the cell. The small ribosomal subunit (SSU) binds messenger RNAs (mRNAs) and translates the encoded message by selecting cognate aminoacyl-transfer RNA (tRNA) molecules. The large subunit (LSU) contains the ribosomal catalytic site termed the peptidyl transferase center (PTC), which catalyzes the formation of peptide bonds, thereby polymerizing the amino acids delivered by tRNAs into a polypeptide chain. The nascent polypeptides leave the ribosome through a tunnel in the LSU and interact with protein factors that function in enzymatic processing, targeting, and the membrane insertion of nascent chains at the exit of the ribosomal tunnel. This is Large ribosomal subunit protein uL18 (RpL5) from Aedes aegypti (Yellowfever mosquito).